The primary structure comprises 279 residues: Very long chain fatty acid elongase 2 (279 aa).

7 helical membrane-spanning segments follow: residues 12 to 32 (WFLL…LLSI), 50 to 70 (ILTL…VELV), 98 to 118 (VLWW…FFVL), 136 to 156 (MFNI…FFGP), 158 to 178 (LNSF…FPSM), 188 to 208 (LTQA…SAVV), and 213 to 233 (FPFG…ILFL). The Di-lysine motif signature appears at 276 to 279 (KKVQ).

The protein belongs to the ELO family. ELOVL2 subfamily. As to quaternary structure, interacts with TECR.

It is found in the endoplasmic reticulum membrane. The enzyme catalyses a very-long-chain acyl-CoA + malonyl-CoA + H(+) = a very-long-chain 3-oxoacyl-CoA + CO2 + CoA. The catalysed reaction is (7Z,10Z,13Z,16Z,19Z)-docosapentaenoyl-CoA + malonyl-CoA + H(+) = (9Z,12Z,15Z,18Z,21Z)-3-oxotetracosapentaenoyl-CoA + CO2 + CoA. It carries out the reaction (5Z,8Z,11Z,14Z,17Z)-eicosapentaenoyl-CoA + malonyl-CoA + H(+) = 3-oxo-(7Z,10Z,13Z,16Z,19Z)-docosapentaenoyl-CoA + CO2 + CoA. It catalyses the reaction (5Z,8Z,11Z,14Z)-eicosatetraenoyl-CoA + malonyl-CoA + H(+) = (7Z,10Z,13Z,16Z)-3-oxodocosatetraenoyl-CoA + CO2 + CoA. The enzyme catalyses (7Z,10Z,13Z,16Z)-docosatetraenoyl-CoA + malonyl-CoA + H(+) = (9Z,12Z,15Z,18Z)-3-oxotetracosatetraenoyl-CoA + CO2 + CoA. Its pathway is lipid metabolism; polyunsaturated fatty acid biosynthesis. Its function is as follows. Catalyzes the first and rate-limiting reaction of the four reactions that constitute the long-chain fatty acids elongation cycle. This endoplasmic reticulum-bound enzymatic process allows the addition of 2 carbons to the chain of long- and very long-chain fatty acids (VLCFAs) per cycle. Condensing enzyme that catalyzes the synthesis of polyunsaturated very long chain fatty acid (C20- and C22-PUFA), acting specifically toward polyunsaturated acyl-CoA with the higher activity toward C20:4(n-6) acyl-CoA. May participate in the production of polyunsaturated VLCFAs of different chain lengths that are involved in multiple biological processes as precursors of membrane lipids and lipid mediators. The chain is Very long chain fatty acid elongase 2 from Rattus norvegicus (Rat).